The chain runs to 461 residues: Transforming growth factor beta-1-induced transcript 1 protein (461 aa).

The residue at position 1 (Met1) is an N-acetylmethionine. Residues 1 to 87 form a disordered region; it reads MEDLDALLSD…PFSSSSGVLG (87 aa). The tract at residues 1-200 is transcription activation; sequence MEDLDALLSD…GSPSPPEPTG (200 aa). The interaction with PTK2B/PYK2 stretch occupies residues 1–240; that stretch reads MEDLDALLSD…CNKPIAGQVV (240 aa). The short motif at 3-15 is the LD motif 1 element; that stretch reads DLDALLSDLETTT. Residue Thr33 is modified to Phosphothreonine. Position 38 is a phosphotyrosine (Tyr38). The segment covering 40-52 has biased composition (polar residues); it reads HQPQTGSGESSGA. Position 60 is a phosphotyrosine; by FAK2 and FYN (Tyr60). Ser68 is subject to Phosphoserine. The interval 83–136 is interaction with PTK2/FAK1; it reads SGVLGTGLCELDRLLQELNATQFNITDEIMSQFPSSKVASGEQKEDQSEDKKRP. The LD motif 2 signature appears at 92 to 104; that stretch reads ELDRLLQELNATQ. Positions 116-152 are disordered; the sequence is PSSKVASGEQKEDQSEDKKRPSLPSSPSPGLPKASAT. Residues 124–135 are compositionally biased toward basic and acidic residues; the sequence is EQKEDQSEDKKR. Phosphoserine occurs at positions 137, 140, 141, 143, 164, and 186. The LD motif 3 signature appears at 157-168; it reads ELDRLMASLSDF. A disordered region spans residues 172 to 205; sequence NHLPASGPTQPPVVSSTNEGSPSPPEPTGKGSLD. Polar residues predominate over residues 183 to 192; that stretch reads PVVSSTNEGS. Position 188 is a phosphothreonine (Thr188). Residues Ser192 and Ser194 each carry the phosphoserine modification. The LD motif 4 signature appears at 203 to 215; that stretch reads SLDTMLGLLQSDL. 4 LIM zinc-binding domains span residues 226–285, 286–343, 344–403, and 404–461; these read GLCG…RFSP, RCGF…QLFA, PRCQ…RRGS, and LCAT…KLFG. Phosphoserine is present on Ser403. A Phosphothreonine modification is found at Thr407.

It belongs to the paxillin family. Homooligomer. Interacts with PPARG. Interacts with TRAF4. Interacts with CRIP2. Interacts with HSPB1. Interacts with ILK. Interacts with LIMS1 and LIMS2. Interacts with NCK2. Interacts with NUDT16L1. Interacts with PAK. Interacts with PTPN12. Interacts with TCF3. Interacts with TCF7L2. Interacts with VCL. Interacts (via LD motif 3) with GIT1. Also interacts with GIT2. Forms a complex with ARHGEF7. Interacts with AR/androgen receptor in a ligand-dependent manner. Interacts with CSK. Interacts with PTK2/FAK1 and PTK2B/PYK2. Interacts with SLC6A3 and SLC6A4. Interacts with NR3C1. Interacts with SMAD3. Interacts with MAPK15. Interacts with SRC. Interacts with LYN. Interacts with talin. Interacts (via LIM zinc-binding domain 2) with CBLC (via RING-type zinc finger); the interaction is direct and enhances CBLC E3 ubiquitin-protein ligase activity. Interacts with PARVA. Interacts with PXN. Phosphorylated by gonadotropin-releasing hormone-activated SRC. Expressed in platelets, smooth muscle and prostate stromal cells (at protein level).

The protein localises to the cell junction. Its subcellular location is the focal adhesion. It is found in the nucleus matrix. The protein resides in the cytoplasm. It localises to the cytoskeleton. Its function is as follows. Functions as a molecular adapter coordinating multiple protein-protein interactions at the focal adhesion complex and in the nucleus. Links various intracellular signaling modules to plasma membrane receptors and regulates the Wnt and TGFB signaling pathways. May also regulate SLC6A3 and SLC6A4 targeting to the plasma membrane hence regulating their activity. In the nucleus, functions as a nuclear receptor coactivator regulating glucocorticoid, androgen, mineralocorticoid and progesterone receptor transcriptional activity. May play a role in the processes of cell growth, proliferation, migration, differentiation and senescence. May have a zinc-dependent DNA-binding activity. The sequence is that of Transforming growth factor beta-1-induced transcript 1 protein (TGFB1I1) from Homo sapiens (Human).